The sequence spans 128 residues: uncharacterized protein (128 aa).

4 helical membrane passes run 5-25, 27-47, 60-80, and 87-107; these read ILAL…YSMM, PVLV…PLFL, QLWW…FIGL, and SAVT…HFFF. An EamA domain is found at 9–110; it reads LIWSSSLIVG…FVGHFFFKTK (102 aa).

It localises to the cell membrane. This is an uncharacterized protein from Haemophilus influenzae (strain ATCC 51907 / DSM 11121 / KW20 / Rd).